The primary structure comprises 357 residues: Probable butyrate kinase (357 aa).

This sequence belongs to the acetokinase family.

Its subcellular location is the cytoplasm. The catalysed reaction is butanoate + ATP = butanoyl phosphate + ADP. The sequence is that of Probable butyrate kinase from Thermotoga petrophila (strain ATCC BAA-488 / DSM 13995 / JCM 10881 / RKU-1).